Consider the following 433-residue polypeptide: 3-phosphoshikimate 1-carboxyvinyltransferase (433 aa).

3-phosphoshikimate-binding residues include Lys-21, Ser-22, and Arg-26. Lys-21 lines the phosphoenolpyruvate pocket. Phosphoenolpyruvate contacts are provided by Gly-96 and Arg-124. 3-phosphoshikimate is bound by residues Ser-167, Ser-168, Gln-169, Ser-195, Asp-310, and Lys-337. Gln-169 contacts phosphoenolpyruvate. Asp-310 functions as the Proton acceptor in the catalytic mechanism. 3 residues coordinate phosphoenolpyruvate: Arg-341, Arg-384, and Lys-410.

Belongs to the EPSP synthase family. In terms of assembly, monomer.

Its subcellular location is the cytoplasm. The catalysed reaction is 3-phosphoshikimate + phosphoenolpyruvate = 5-O-(1-carboxyvinyl)-3-phosphoshikimate + phosphate. Its pathway is metabolic intermediate biosynthesis; chorismate biosynthesis; chorismate from D-erythrose 4-phosphate and phosphoenolpyruvate: step 6/7. Functionally, catalyzes the transfer of the enolpyruvyl moiety of phosphoenolpyruvate (PEP) to the 5-hydroxyl of shikimate-3-phosphate (S3P) to produce enolpyruvyl shikimate-3-phosphate and inorganic phosphate. This chain is 3-phosphoshikimate 1-carboxyvinyltransferase, found in Clostridium botulinum (strain Eklund 17B / Type B).